A 285-amino-acid chain; its full sequence is 2-dehydro-3-deoxyphosphooctonate aldolase (285 aa).

Belongs to the KdsA family.

The protein resides in the cytoplasm. The enzyme catalyses D-arabinose 5-phosphate + phosphoenolpyruvate + H2O = 3-deoxy-alpha-D-manno-2-octulosonate-8-phosphate + phosphate. It functions in the pathway carbohydrate biosynthesis; 3-deoxy-D-manno-octulosonate biosynthesis; 3-deoxy-D-manno-octulosonate from D-ribulose 5-phosphate: step 2/3. Its pathway is bacterial outer membrane biogenesis; lipopolysaccharide biosynthesis. This chain is 2-dehydro-3-deoxyphosphooctonate aldolase, found in Polaromonas sp. (strain JS666 / ATCC BAA-500).